The sequence spans 132 residues: Small ribosomal subunit protein uS11 (132 aa).

This sequence belongs to the universal ribosomal protein uS11 family. As to quaternary structure, part of the 30S ribosomal subunit. Interacts with proteins S7 and S18. Binds to IF-3.

Located on the platform of the 30S subunit, it bridges several disparate RNA helices of the 16S rRNA. Forms part of the Shine-Dalgarno cleft in the 70S ribosome. The sequence is that of Small ribosomal subunit protein uS11 from Cupriavidus pinatubonensis (strain JMP 134 / LMG 1197) (Cupriavidus necator (strain JMP 134)).